The chain runs to 367 residues: Aurora kinase (367 aa).

Composition is skewed to polar residues over residues 1 to 29 and 37 to 48; these read MQRNSLVNIKLNANSPSKKTTTRPNTSRI and HSPQQRNPNSKI. The segment at 1 to 52 is disordered; that stretch reads MQRNSLVNIKLNANSPSKKTTTRPNTSRINKPWRISHSPQQRNPNSKIPSPV. Position 5 is a phosphoserine; by autocatalysis (S5). S76 carries the post-translational modification Phosphoserine. Residues 104 to 355 form the Protein kinase domain; sequence FELGKKLGKG…LGDVKMHPWI (252 aa). ATP-binding positions include 110 to 118 and K133; that span reads LGKGKFGKV. D227 acts as the Proton acceptor in catalysis. T260 carries the phosphothreonine; by autocatalysis modification.

It belongs to the protein kinase superfamily. Ser/Thr protein kinase family. Aurora subfamily. As to quaternary structure, component of the CPC complex at least composed of IPL1, BIR1 and SLI15.

The protein resides in the nucleus. Its subcellular location is the cytoplasm. It is found in the cytoskeleton. The protein localises to the spindle. It localises to the chromosome. The protein resides in the centromere. Its subcellular location is the kinetochore. The enzyme catalyses L-seryl-[protein] + ATP = O-phospho-L-seryl-[protein] + ADP + H(+). It carries out the reaction L-threonyl-[protein] + ATP = O-phospho-L-threonyl-[protein] + ADP + H(+). Its function is as follows. Component of the chromosomal passenger complex (CPC), a complex that acts as a key regulator of chromosome segregation and cytokinesis. Has a role in error-correction of aberrent kinetochore-microtubule attachments to ensure that sister kinetochores become bioriented and connect to opposite poles by promoting spindle assembly checkpoint signaling. Acts in opposition to the phosphatase PP1. Not required for kinetochore detachment from microtubules during replication of centromeric DNA. Phosphorylates histone H3 to form H3S10ph during mitosis and meiosis. Phosphorylates CNN1, which contributes to the enrichment of CNN1 on anaphase kinetochores. Phosphorylates RGD1. This Saccharomyces cerevisiae (strain ATCC 204508 / S288c) (Baker's yeast) protein is Aurora kinase (IPL1).